Consider the following 691-residue polypeptide: Ribonucleoprotein PTB-binding 2 (691 aa).

The span at 1 to 30 (MAAAAGDGGGEGGAGLGSAAGLGPGPGLRG) shows a compositional bias: gly residues. Residues 1–47 (MAAAAGDGGGEGGAGLGSAAGLGPGPGLRGQGPSAEAHEGAPDPMPA) are disordered. The residue at position 2 (A2) is an N-acetylalanine. 3 RRM domains span residues 69-140 (RKIL…LQPT), 142-220 (ALLC…WMDV), and 231-309 (KCLC…FCAP). Disordered stretches follow at residues 492-522 (PNQHIAGQAGPGHSNTQEKQPATVGMAEGNF) and 543-574 (GHHKQQQSQPKGTEISSGAASKNQTSLLGEPP). The segment covering 548–569 (QQSQPKGTEISSGAASKNQTSL) has biased composition (polar residues).

In terms of assembly, interacts with PTBP1 and RAVER1.

It is found in the nucleus. The protein resides in the cytoplasm. Its function is as follows. May bind single-stranded nucleic acids. In Homo sapiens (Human), this protein is Ribonucleoprotein PTB-binding 2 (RAVER2).